The sequence spans 473 residues: MKNLYSLRRFYHVETLFNGTLIVGGRDQESTGFAWWAGNARLINLSGKLLGAHVAHAGLIVFWAGAMNLFEVAHFVPEKPMYEQGLILLPHLATLGYGVGPGGEVIDTFPYFVSGVLHLISSAVLGFGGVYHSLIGPETLEESFPFFGYVWKDKNKMTTILGIHLVLLGLGALLLVLKARYLGGVYDTWAPGGGDVRVITNPTTSPAVIFGYILKSPFGGEGWIVSVDNMEDVIGGHLWIGLLCVFGGIWHILTKPFGWARRAFVWSGEAYLSYSLGAISVMGFIACCFVWFNNTVYPSEFYGPTGPEASQAQAFTFLVRDQRLGANVGSAQGPTGLGKYLMRSPTGEIIFGGETMRFWDTRAPWIEPLRGPNGLDLSKLKNDIQPWQERRSAEYMTHAPLGSLNSVGGVATEINAVNFVSPRSWLSTSHFVLGFFFFVAHLWHAGRARAAAAGFEKGIDRDTEPTLFMRPLD.

A propeptide spanning residues 1–14 is cleaved from the precursor; that stretch reads MKNLYSLRRFYHVE. An N-acetylthreonine modification is found at threonine 15. At threonine 15 the chain carries Phosphothreonine. A run of 5 helical transmembrane segments spans residues 69–93, 134–155, 178–200, 255–275, and 291–312; these read LFEV…PHLA, LIGP…KDKN, KARY…RVIT, KPFG…LSYS, and WFNN…ASQA. Glutamate 367 serves as a coordination point for [CaMn4O5] cluster. A helical transmembrane segment spans residues 447-471; it reads RARAAAAGFEKGIDRDTEPTLFMRP.

The protein belongs to the PsbB/PsbC family. PsbC subfamily. As to quaternary structure, PSII is composed of 1 copy each of membrane proteins PsbA, PsbB, PsbC, PsbD, PsbE, PsbF, PsbH, PsbI, PsbJ, PsbK, PsbL, PsbM, PsbT, PsbX, PsbY, PsbZ, Psb30/Ycf12, at least 3 peripheral proteins of the oxygen-evolving complex and a large number of cofactors. It forms dimeric complexes. Binds multiple chlorophylls and provides some of the ligands for the Ca-4Mn-5O cluster of the oxygen-evolving complex. It may also provide a ligand for a Cl- that is required for oxygen evolution. PSII binds additional chlorophylls, carotenoids and specific lipids. serves as cofactor.

It is found in the plastid. The protein resides in the chloroplast thylakoid membrane. One of the components of the core complex of photosystem II (PSII). It binds chlorophyll and helps catalyze the primary light-induced photochemical processes of PSII. PSII is a light-driven water:plastoquinone oxidoreductase, using light energy to abstract electrons from H(2)O, generating O(2) and a proton gradient subsequently used for ATP formation. In Nephroselmis olivacea (Green alga), this protein is Photosystem II CP43 reaction center protein.